The chain runs to 212 residues: Adenylate kinase (212 aa).

An ATP-binding site is contributed by 10–15 (GAGKGT). Positions 30–59 (STGDILREAMAQETELGQKAKSYIDAGELV) are NMP. AMP is bound by residues Thr-31, Arg-36, 57–59 (ELV), 84–87 (GYPR), and Gln-91. Positions 125–158 (RRRVHEETGETYHLDHDPPPEDVDPDLIVQRSDD) are LID. ATP-binding positions include Arg-126 and 135 to 136 (TY). The AMP site is built by Arg-155 and Arg-166. Residue Gly-194 coordinates ATP.

This sequence belongs to the adenylate kinase family. In terms of assembly, monomer.

The protein resides in the cytoplasm. It catalyses the reaction AMP + ATP = 2 ADP. Its pathway is purine metabolism; AMP biosynthesis via salvage pathway; AMP from ADP: step 1/1. Functionally, catalyzes the reversible transfer of the terminal phosphate group between ATP and AMP. Plays an important role in cellular energy homeostasis and in adenine nucleotide metabolism. The polypeptide is Adenylate kinase (Salinibacter ruber (strain DSM 13855 / M31)).